An 845-amino-acid polypeptide reads, in one-letter code: Leucine--tRNA ligase (845 aa).

A 'HIGH' region motif is present at residues 40 to 51; that stretch reads PYPSGAGLHVGH. The 'KMSKS' region motif lies at 623–627; it reads KMSKS. K626 contacts ATP.

This sequence belongs to the class-I aminoacyl-tRNA synthetase family.

The protein resides in the cytoplasm. The enzyme catalyses tRNA(Leu) + L-leucine + ATP = L-leucyl-tRNA(Leu) + AMP + diphosphate. This chain is Leucine--tRNA ligase, found in Protochlamydia amoebophila (strain UWE25).